A 1816-amino-acid polypeptide reads, in one-letter code: Laminin subunit alpha-4 (1816 aa).

A signal peptide spans 1–24 (MGWSTAWCSVLALWLLWCAVCSNA). O-linked (Xyl...) (chondroitin sulfate) serine glycosylation occurs at serine 39. 12 cysteine pairs are disulfide-bonded: cysteine 82–cysteine 91, cysteine 84–cysteine 98, cysteine 101–cysteine 110, cysteine 113–cysteine 129, cysteine 132–cysteine 146, cysteine 134–cysteine 155, cysteine 157–cysteine 166, cysteine 169–cysteine 184, cysteine 187–cysteine 202, cysteine 189–cysteine 209, cysteine 212–cysteine 221, and cysteine 224–cysteine 238. Laminin EGF-like domains follow at residues 82–131 (CDCN…FCQP), 132–186 (CPCP…TCKK), and 187–240 (CDCS…NCAV). A glycan (N-linked (GlcNAc...) asparagine) is linked at asparagine 104. N-linked (GlcNAc...) asparagine glycosylation is present at asparagine 215. The region spanning 241–255 (CNCGGGPCDSVTGEC) is the Laminin EGF-like 4; truncated domain. The interval 256-825 (LEEGFEVPTG…AQTRSVASKI (570 aa)) is domain II and I. Residues asparagine 308, asparagine 333, asparagine 458, asparagine 550, asparagine 571, asparagine 574, asparagine 631, and asparagine 639 are each glycosylated (N-linked (GlcNAc...) asparagine). Residues 431-523 (THRELVDEEA…ERVKEQMEVV (93 aa)) adopt a coiled-coil conformation. Residues 556–604 (AEIDGAKNELQGKLSNLSNLSHDLVQEATDHAYNLQQEADELSRNLHSS) adopt a coiled-coil conformation. The stretch at 655–717 (IIYHKDESDN…AVKQLQAAER (63 aa)) forms a coiled coil. The Cell attachment site signature appears at 717–719 (RGD). Residues asparagine 735, asparagine 751, asparagine 754, asparagine 780, and asparagine 803 are each glycosylated (N-linked (GlcNAc...) asparagine). Residues 770 to 799 (AVDSARDAVRNLTEVVPQLLDQLRTVEQKR) adopt a coiled-coil conformation. 3 Laminin G-like domains span residues 826–1030 (QVSM…SVPC), 1042–1222 (AASY…GYGC), and 1229–1397 (SRRA…LYEC). A disulfide bridge links cysteine 1000 with cysteine 1030. Asparagine 1088 is a glycosylation site (N-linked (GlcNAc...) asparagine). A disulfide bridge links cysteine 1196 with cysteine 1222. N-linked (GlcNAc...) asparagine glycans are attached at residues asparagine 1283 and asparagine 1361. A disulfide bond links cysteine 1365 and cysteine 1397. Residues 1409 to 1419 (KKGKNSSKPKT) show a composition bias toward basic residues. The tract at residues 1409 to 1433 (KKGKNSSKPKTNKQGEKSKDAPSWD) is disordered. The segment covering 1421 to 1430 (KQGEKSKDAP) has biased composition (basic and acidic residues). Laminin G-like domains follow at residues 1462–1633 (AYQY…VTPC) and 1640–1813 (TGTY…INSC). Cystine bridges form between cysteine 1610/cysteine 1633 and cysteine 1785/cysteine 1813.

Laminin is a complex glycoprotein, consisting of three different polypeptide chains (alpha, beta, gamma), which are bound to each other by disulfide bonds into a cross-shaped molecule comprising one long and three short arms with globules at each end. Alpha-4 is a subunit of laminin-8 (laminin-411), laminin-9 (laminin-421) and laminin-14 (laminin-423). As to expression, strongly expressed in peripheral nerves, cardiac muscle, fat, dermis, lung stroma, aortic endothelium, endocardium and endothelium of blood vessels in skin and brain.

It is found in the secreted. Its subcellular location is the extracellular space. The protein localises to the extracellular matrix. It localises to the basement membrane. Binding to cells via a high affinity receptor, laminin is thought to mediate the attachment, migration and organization of cells into tissues during embryonic development by interacting with other extracellular matrix components. This chain is Laminin subunit alpha-4 (Lama4), found in Mus musculus (Mouse).